Here is a 424-residue protein sequence, read N- to C-terminus: Double homeobox protein 4-like protein 2 (424 aa).

Over residues 1 to 10 (MALPTPSDST) the composition is skewed to polar residues. Disordered stretches follow at residues 1-24 (MALPTPSDSTLPAEARGRGRRRRL), 72-102 (SRQLRQHRRESRPWPGRRGPPEGRRKRTAVT), 148-167 (RHPGQGGRAPAQAGGLCSAA), 218-362 (LQPS…LQEP), and 388-414 (QPLLETEAPGELEASEEAASLEAPLSE). DNA-binding regions (homeobox) lie at residues 19–78 (GRRR…LRQH) and 94–153 (GRRK…PGQG). Over residues 265 to 274 (KSREDRDPQR) the composition is skewed to basic and acidic residues. Low complexity-rich tracts occupy residues 278 to 302 (PGPCAVAQPGPAQAGPQGQGVLAPP) and 319 to 329 (AGAAWEPQAGA).

It localises to the nucleus. In terms of biological role, may be involved in transcriptional regulation. The sequence is that of Double homeobox protein 4-like protein 2 (DUX4L2) from Homo sapiens (Human).